Reading from the N-terminus, the 715-residue chain is Fatty acid oxidation complex subunit alpha (715 aa).

The interval 1-190 (MTTTSAFMLN…KAGLVDDVVP (190 aa)) is enoyl-CoA hydratase. A 3-hydroxyacyl-CoA dehydrogenase region spans residues 306–715 (GPLNSVGILG…WTNGETDQGN (410 aa)).

The protein in the N-terminal section; belongs to the enoyl-CoA hydratase/isomerase family. This sequence in the central section; belongs to the 3-hydroxyacyl-CoA dehydrogenase family. In terms of assembly, heterotetramer of two alpha chains (FadJ) and two beta chains (FadI).

The protein resides in the cytoplasm. The catalysed reaction is a (3S)-3-hydroxyacyl-CoA = a (2E)-enoyl-CoA + H2O. The enzyme catalyses a 4-saturated-(3S)-3-hydroxyacyl-CoA = a (3E)-enoyl-CoA + H2O. It carries out the reaction a (3S)-3-hydroxyacyl-CoA + NAD(+) = a 3-oxoacyl-CoA + NADH + H(+). It catalyses the reaction (3S)-3-hydroxybutanoyl-CoA = (3R)-3-hydroxybutanoyl-CoA. Its pathway is lipid metabolism; fatty acid beta-oxidation. Catalyzes the formation of a hydroxyacyl-CoA by addition of water on enoyl-CoA. Also exhibits 3-hydroxyacyl-CoA epimerase and 3-hydroxyacyl-CoA dehydrogenase activities. The chain is Fatty acid oxidation complex subunit alpha from Salmonella dublin (strain CT_02021853).